Consider the following 461-residue polypeptide: Nucleobindin-1 (461 aa).

The first 26 residues, 1-26 (MPPSGPRGTLLLLPLLLLLLLRAVLA), serve as a signal peptide directing secretion. The interval 42–51 (TESPDTGLYY) is O-glycosylated at one site. The residue at position 86 (serine 86) is a Phosphoserine; by FAM20C. The residue at position 148 (threonine 148) is a Phosphothreonine; by FAM20C. Residues 150–218 (EARDLELLIQ…QQRRHREHPK (69 aa)) are a coiled coil. The DNA-binding element occupies 172–218 (HHEEFKRYEMLKEHERRRYLESLGEEQRKEAERKLEEQQRRHREHPK). The span at 193–210 (SLGEEQRKEAERKLEEQQ) shows a compositional bias: basic and acidic residues. The segment at 193–221 (SLGEEQRKEAERKLEEQQRRHREHPKVNV) is disordered. The interval 228–321 (LKEVWEELDG…VTLEEFLAST (94 aa)) is binds to GNAI2 and GNAI3. 2 EF-hand domains span residues 240–275 (PNRF…ELEK) and 292–327 (ERLR…KEFG). Ca(2+) is bound by residues aspartate 253, asparagine 255, aspartate 257, glutamate 264, aspartate 305, asparagine 307, aspartate 309, and glutamate 316. A GBA motif is present at residues 303-333 (NVDTNQDRLVTLEEFLASTQRKEFGDTGEGW). A coiled-coil region spans residues 341–407 (AYTEEELRRF…QRKQQQQQQQ (67 aa)). The segment at 368-461 (LSQETEALGR…LPEVEVPQHL (94 aa)) is disordered. Phosphoserine; by FAM20C is present on serine 369. A compositionally biased stretch (basic and acidic residues) spans 437-461 (DQKEVDTSEKKLLERLPEVEVPQHL).

It belongs to the nucleobindin family. Interacts (via GBA motif) with guanine nucleotide-binding protein G(i) alpha subunits GNAI1, GNAI2 and GNAI3 with higher affinity for GNAI1 and GNAI3 than for GNAI2. Preferentially interacts with inactive rather than active GNAI3. Interaction with GNAI3 is inhibited when NUCB1 binds calcium, probably due to a conformational change which renders the GBA motif inaccessible. In terms of processing, O-glycosylated. Expressed both in fetal and adult heart, lung, liver, kidney and brain, and in adult skeletal muscle, placenta and pancreas.

The protein resides in the golgi apparatus. It is found in the cis-Golgi network membrane. It localises to the cytoplasm. Its subcellular location is the secreted. Functionally, major calcium-binding protein of the Golgi which may have a role in calcium homeostasis. Acts as a non-receptor guanine nucleotide exchange factor which binds to and activates alpha subunits of guanine nucleotide-binding proteins (G proteins). The polypeptide is Nucleobindin-1 (NUCB1) (Homo sapiens (Human)).